Here is a 446-residue protein sequence, read N- to C-terminus: RUN domain-containing protein 3A (446 aa).

Residues 1 to 298 (MEASFVQTTM…LQLQLEEAAA (298 aa)) are interaction with RAP2A. The 138-residue stretch at 52–189 (DDSSEEFVNF…IDFSFCLKGE (138 aa)) folds into the RUN domain. Thr215 is subject to Phosphothreonine. The disordered stretch occupies residues 216–239 (DEEERHSAESSTSEDNSPEHPYLP). Residue Ser232 is modified to Phosphoserine. Residues 267–322 (YLEELVRLRESQLKDLEAENRRLQLQLEEAAAQNQREKRELEGVILELQEQLTGLI) are a coiled coil. Residues 372-384 (PLSAEASLSSDSQ) show a composition bias toward polar residues. The interval 372–404 (PLSAEASLSSDSQRLGEGTRDEEPWGPIGKDPT) is disordered. Phosphoserine is present on residues Ser416 and Ser419.

It belongs to the RUNDC3 family. In terms of assembly, interacts with the GTP-bound form of RAP2A.

Functionally, may act as an effector of RAP2A in neuronal cells. The polypeptide is RUN domain-containing protein 3A (RUNDC3A) (Homo sapiens (Human)).